We begin with the raw amino-acid sequence, 708 residues long: Elongation factor G 1 (708 aa).

Residues 9–295 (AKVRNIGIMA…AVVRYLPTPL (287 aa)) enclose the tr-type G domain. Residues 18-25 (AHIDAGKT), 86-90 (DTPGH), and 140-143 (NKLD) each bind GTP.

Belongs to the TRAFAC class translation factor GTPase superfamily. Classic translation factor GTPase family. EF-G/EF-2 subfamily.

It localises to the cytoplasm. In terms of biological role, catalyzes the GTP-dependent ribosomal translocation step during translation elongation. During this step, the ribosome changes from the pre-translocational (PRE) to the post-translocational (POST) state as the newly formed A-site-bound peptidyl-tRNA and P-site-bound deacylated tRNA move to the P and E sites, respectively. Catalyzes the coordinated movement of the two tRNA molecules, the mRNA and conformational changes in the ribosome. The chain is Elongation factor G 1 (fusA) from Streptomyces coelicolor (strain ATCC BAA-471 / A3(2) / M145).